Reading from the N-terminus, the 598-residue chain is MFS siderochrome iron transporter D (598 aa).

The disordered stretch occupies residues 1 to 34; that stretch reads MLSSWQKKFFQTPEHPPAEGIAPPRDDGVPNPEP. Residues 1-76 are Cytoplasmic-facing; the sequence is MLSSWQKKFF…AEAITLTWSK (76 aa). A helical membrane pass occupies residues 77–97; sequence ISLGAAYFLMWLLYLVNGFQA. Topologically, residues 98-115 are extracellular; it reads SITGNLSAYVTSGFESHS. Residue Asn-102 is glycosylated (N-linked (GlcNAc...) asparagine). The helical transmembrane segment at 116-136 threads the bilayer; the sequence is LIPVISIVSSVMSAATYMPLA. Over 137–144 the chain is Cytoplasmic; the sequence is KVLNLWDR. A helical transmembrane segment spans residues 145-165; that stretch reads SIGFIIMVAFATLGLILSATC. The Extracellular segment spans residues 166-171; sequence HDIGTY. A helical transmembrane segment spans residues 172 to 192; the sequence is CAAQVFYSIGFAGIIFSVDVI. Over 193–203 the chain is Cytoplasmic; that stretch reads TADTSTLRDRG. Residues 204 to 224 form a helical membrane-spanning segment; that stretch reads LAYAFTSSPYIITAFGGPAAA. The Extracellular portion of the chain corresponds to 225–233; it reads EHFYDSNWR. A helical transmembrane segment spans residues 234 to 254; sequence WAYGCFSIVLPVVALPMFCLL. Topologically, residues 255 to 289 are cytoplasmic; that stretch reads RWNRHKAKKSGLLKDKADSGRTWMESIRHYIIEFD. A helical membrane pass occupies residues 290 to 310; sequence ILGVFFLAAGLVLFLLPFSIA. The Extracellular portion of the chain corresponds to 311-318; it reads GSTEDDWK. Residues 319–339 form a helical membrane-spanning segment; it reads SASIITMLVIGFVCLLVFALV. The Cytoplasmic portion of the chain corresponds to 340 to 341; that stretch reads ER. A helical membrane pass occupies residues 342–362; the sequence is FVAPVPFLPWALLASRTVLGA. The Extracellular segment spans residues 363–396; the sequence is CMLDVCYQIAYYCWFNYYTSYLQVVYGTSITTAG. A helical transmembrane segment spans residues 397–417; that stretch reads YITSIFDVVSGVWLFIVGFLI. Over 418–424 the chain is Cytoplasmic; sequence KKTNRFR. The helical transmembrane segment at 425-445 threads the bilayer; that stretch reads WLLFIAVPLYILGVGLMIYFR. Residues 446–450 lie on the Extracellular side of the membrane; that stretch reads KPSWS. A helical transmembrane segment spans residues 451–471; it reads VGYMIMCQIFIAFAGGTMIIC. The Cytoplasmic portion of the chain corresponds to 472–490; the sequence is QQVAVLAASDHDHAASSLA. The helical transmembrane segment at 491–511 threads the bilayer; that stretch reads FLNVFGTMGSAVGSSISGAIW. Residues 512-562 are Extracellular-facing; the sequence is THTLPGALQRLLPDSVKADWQTIYDSLEEQLSYERGTLIRQAIALAYASTQ. Residues 563–583 form a helical membrane-spanning segment; that stretch reads SKMLIAGTAIMALSLVWMFVI. Topologically, residues 584–598 are cytoplasmic; the sequence is RDIKLTKTQTKGVLF.

It belongs to the major facilitator superfamily.

The protein resides in the cell membrane. Major facilitator transporter involved in fusarinine C (FsC) uptake. In contrast to TAFC-mediated iron uptake, FsC-mediated iron uptake via mirD does not play a significant role during infection. The protein is MFS siderochrome iron transporter D of Aspergillus fumigatus (strain ATCC MYA-4609 / CBS 101355 / FGSC A1100 / Af293) (Neosartorya fumigata).